Here is a 325-residue protein sequence, read N- to C-terminus: ATP phosphoribosyltransferase (325 aa).

Belongs to the ATP phosphoribosyltransferase family. Long subfamily. The cofactor is Mg(2+).

The protein localises to the cytoplasm. The catalysed reaction is 1-(5-phospho-beta-D-ribosyl)-ATP + diphosphate = 5-phospho-alpha-D-ribose 1-diphosphate + ATP. The protein operates within amino-acid biosynthesis; L-histidine biosynthesis; L-histidine from 5-phospho-alpha-D-ribose 1-diphosphate: step 1/9. With respect to regulation, feedback inhibited by histidine. Functionally, catalyzes the condensation of ATP and 5-phosphoribose 1-diphosphate to form N'-(5'-phosphoribosyl)-ATP (PR-ATP). Has a crucial role in the pathway because the rate of histidine biosynthesis seems to be controlled primarily by regulation of HisG enzymatic activity. The polypeptide is ATP phosphoribosyltransferase (Nitrobacter winogradskyi (strain ATCC 25391 / DSM 10237 / CIP 104748 / NCIMB 11846 / Nb-255)).